The sequence spans 429 residues: Enolase (429 aa).

Position 164 (Gln164) interacts with (2R)-2-phosphoglycerate. Catalysis depends on Glu206, which acts as the Proton donor. Asp243, Glu286, and Asp313 together coordinate Mg(2+). Residues Lys338, Arg367, Ser368, and Lys389 each coordinate (2R)-2-phosphoglycerate. Lys338 serves as the catalytic Proton acceptor.

It belongs to the enolase family. Homooctamer. Forms a ring-shaped particle. It depends on Mg(2+) as a cofactor.

The protein resides in the cytoplasm. It localises to the secreted. Its subcellular location is the cell surface. The catalysed reaction is (2R)-2-phosphoglycerate = phosphoenolpyruvate + H2O. It functions in the pathway carbohydrate degradation; glycolysis; pyruvate from D-glyceraldehyde 3-phosphate: step 4/5. With respect to regulation, inhibited by fluoride and phosphate. Catalyzes the reversible conversion of 2-phosphoglycerate (2-PG) into phosphoenolpyruvate (PEP). It is essential for the degradation of carbohydrates via glycolysis. This chain is Enolase, found in Thermotoga maritima (strain ATCC 43589 / DSM 3109 / JCM 10099 / NBRC 100826 / MSB8).